The chain runs to 302 residues: uncharacterized protein (302 aa).

The segment at 1 to 24 (MTEISELASSSQKPEKTKYNLPKP) is disordered.

This is an uncharacterized protein from Schizosaccharomyces pombe (strain 972 / ATCC 24843) (Fission yeast).